The primary structure comprises 584 residues: Tricyclene synthase 1e20, chloroplastic (584 aa).

A chloroplast-targeting transit peptide spans 1 to 45 (MIYIWICFYLQTTLLPCSLSTRTKFAICHNTSKLHRAAYKTSRWN). N30, N209, and N322 each carry an N-linked (GlcNAc...) asparagine glycan. 2 residues coordinate Mg(2+): D341 and D345. Positions 341–345 (DDIFD) match the DDXXD motif motif. N-linked (GlcNAc...) asparagine glycosylation is found at N387 and N468. The Mg(2+) site is built by N485, S489, and E493. N512 carries N-linked (GlcNAc...) asparagine glycosylation.

Belongs to the terpene synthase family. Tpsg subfamily. Mg(2+) serves as cofactor. Requires Mn(2+) as cofactor. Accumulates at low levels in flowers; mostly expressed in both upper and lower petal lobes, and, to a lower extent, in tube and stamens.

The protein resides in the plastid. Its subcellular location is the chloroplast stroma. The catalysed reaction is (2E)-geranyl diphosphate = tricyclene + diphosphate. It catalyses the reaction (2E)-geranyl diphosphate = beta-myrcene + diphosphate. Its pathway is secondary metabolite biosynthesis; terpenoid biosynthesis. Its function is as follows. May contribute to floral scent emission. The chain is Tricyclene synthase 1e20, chloroplastic (1e20) from Antirrhinum majus (Garden snapdragon).